The chain runs to 339 residues: uncharacterized protein (339 aa).

Positions 1–29 (MIKQVCKNITICSLALSTALTVFPASSYA) are cleaved as a signal peptide.

It belongs to the aerolysin family.

This is an uncharacterized protein from Staphylococcus aureus (strain MRSA252).